The sequence spans 58 residues: Large ribosomal subunit protein bL32 (58 aa).

Belongs to the bacterial ribosomal protein bL32 family.

This Prochlorococcus marinus (strain MIT 9515) protein is Large ribosomal subunit protein bL32.